The chain runs to 1252 residues: ABC transporter B family member 19 (1252 aa).

A glycan (N-linked (GlcNAc...) asparagine) is linked at Asn-5. An ABC transmembrane type-1 1 domain is found at Met-41–Lys-330. Helical transmembrane passes span Phe-42 to Phe-62 and Leu-88 to Trp-108. Asp-136 is a binding site for ATP. Helical transmembrane passes span Val-163–Ser-183, Leu-187–Tyr-207, Cys-274–Ile-294, and Ile-308–Phe-328. Positions 276 and 283 each coordinate brassinolide. The 237-residue stretch at Ile-365–Phe-601 folds into the ABC transporter 1 domain. ATP is bound by residues Tyr-374, Ser-376, Gly-405, Lys-406, Ser-407, Thr-408, and Glu-529. An N-linked (GlcNAc...) asparagine glycan is attached at Asn-641. One can recognise an ABC transmembrane type-1 2 domain in the interval Ser-687–Arg-975. The next 2 membrane-spanning stretches (helical) occupy residues Ile-688 to Met-708 and Phe-732 to Phe-752. Asn-758 carries N-linked (GlcNAc...) asparagine glycosylation. Asp-780 is a binding site for ATP. N-linked (GlcNAc...) asparagine glycans are attached at residues Asn-785 and Asn-814. 3 consecutive transmembrane segments (helical) span residues Phe-822 to Leu-842, Gly-914 to Tyr-934, and Val-949 to Leu-969. The interval Glu-965–Ile-1252 is interaction with FKBP42/TWD1. One can recognise an ABC transporter 2 domain in the interval Ile-1010–Gln-1246. Tyr-1019, Ser-1021, Arg-1022, Lys-1051, Ser-1052, and Ser-1053 together coordinate ATP.

Belongs to the ABC transporter superfamily. ABCB family. Multidrug resistance exporter (TC 3.A.1.201) subfamily. In terms of assembly, interacts with 1-naphthylphthalamic acid (NPA), and FKBP42/TWD1. Post-translationally, phosphorylated by PHOT1 in phototropic seedlings, to modulates auxin export and distribution and regulates leaf and petiole curling. Ubiquitous, mostly in shoot meristems. Present in the majority of stem cells, predominantly in a non-polar manner. Accumulates in seedlings roots and hypocotyls, and in roots apices and inflorescences.

The protein localises to the cell membrane. It catalyses the reaction (indol-3-yl)acetate(in) + ATP + H2O = (indol-3-yl)acetate(out) + ADP + phosphate + H(+). The enzyme catalyses brassinolide(in) + ATP + H2O = brassinolide(out) + ADP + phosphate + H(+). It carries out the reaction 24-epi-brassinolide(in) + ATP + H2O = 24-epi-brassinolide(out) + ADP + phosphate + H(+). The catalysed reaction is 24-epi-castasterone(in) + ATP + H2O = 24-epi-castasterone(out) + ADP + phosphate + H(+). It catalyses the reaction castasterone(in) + ATP + H2O = castasterone(out) + ADP + phosphate + H(+). Transport capacity is stimulated by the chaperone protein FKBP42/TWD1. ATPase activity is specifically activated by bioactive brassinosteroids in a dose-dependent manner, including brassinolide (BL), 24-epiBL and 24-epicastasterone (24-epiCS). Inhibited by vanadate. Functionally, brassinosteroid exporter that, in conjunction with ABCB1, supports the accumulation of exogenous brassinosteroids (BR) in the apoplast, thus promoting BR signaling initiation involving the specific receptor BRI1 and required for plant growth and stress responses. Mediates the transport of castasterone (CSA) and brassinolide (BL) across the plasma membrane. Auxin efflux transporter that acts as a negative regulator of light signaling to promote hypocotyl elongation by mediating leaf tip to petiole auxin flux. Required for the regulation of leaf position and morphology during PHOT1-mediated blue light responses involving auxin distribution, especially in low light fluence. Together with ABCB1 and in a FKBP42/TWD1-dependent manner, supports seed development by promoting stamen elongation and, to a lesser extent, anther dehiscence and pollen maturation, probably as auxin transporters. Contributes to the connective auxin transport (CAT) that ensures communication across the shoot system, including auxin loading at axillary bud apices to influence strigolactone-mediated bud outgrowth responses and shoot branching control. Mediates the accumulation of chlorophyll and anthocyanin, as well as the expression of genes in response to light. Participates in auxin efflux and thus regulates the polar auxin basipetal transport (from auxin-producing leaves to auxin-sensitive tissues, and from root tips to root elongating zone). Involved in diverse auxin-mediated responses including gravitropism, phototropism and lateral root formation. Required for the regulation of organ bending, such as gravitropic root bending. This chain is ABC transporter B family member 19, found in Arabidopsis thaliana (Mouse-ear cress).